Consider the following 107-residue polypeptide: Putidaredoxin (107 aa).

The 2Fe-2S ferredoxin-type domain occupies 2 to 106 (SKVVYVSHDG…GIVVDVPDRQ (105 aa)). [2Fe-2S] cluster is bound by residues cysteine 40, cysteine 46, cysteine 49, and cysteine 87.

The protein belongs to the adrenodoxin/putidaredoxin family. In terms of assembly, monomer. Requires [2Fe-2S] cluster as cofactor.

The oxidation of camphor by cytochrome P450-CAM requires the participation of a flavoprotein, putidaredoxin reductase, and an iron-sulfur protein, putidaredoxin, to mediate the transfer of electrons from NADH to P450 for oxygen activation. The protein is Putidaredoxin (camB) of Pseudomonas putida (Arthrobacter siderocapsulatus).